We begin with the raw amino-acid sequence, 186 residues long: ATP synthase subunit delta, chloroplastic (186 aa).

Belongs to the ATPase delta chain family. As to quaternary structure, F-type ATPases have 2 components, F(1) - the catalytic core - and F(0) - the membrane proton channel. F(1) has five subunits: alpha(3), beta(3), gamma(1), delta(1), epsilon(1). CF(0) has four main subunits: a(1), b(1), b'(1) and c(10-14). The alpha and beta chains form an alternating ring which encloses part of the gamma chain. F(1) is attached to F(0) by a central stalk formed by the gamma and epsilon chains, while a peripheral stalk is formed by the delta, b and b' chains.

The protein resides in the plastid. It is found in the chloroplast thylakoid membrane. F(1)F(0) ATP synthase produces ATP from ADP in the presence of a proton or sodium gradient. F-type ATPases consist of two structural domains, F(1) containing the extramembraneous catalytic core and F(0) containing the membrane proton channel, linked together by a central stalk and a peripheral stalk. During catalysis, ATP synthesis in the catalytic domain of F(1) is coupled via a rotary mechanism of the central stalk subunits to proton translocation. Its function is as follows. This protein is part of the stalk that links CF(0) to CF(1). It either transmits conformational changes from CF(0) to CF(1) or is implicated in proton conduction. In Pyropia yezoensis (Susabi-nori), this protein is ATP synthase subunit delta, chloroplastic.